Here is a 396-residue protein sequence, read N- to C-terminus: Jacalin-related lectin 45 (396 aa).

3 consecutive Jacalin-type lectin domains span residues 3 to 138 (KKVT…KTSH), 144 to 264 (QFRM…NFAV), and 270 to 392 (VKKL…YVKP).

This sequence belongs to the jacalin lectin family.

This chain is Jacalin-related lectin 45 (JAL45), found in Arabidopsis thaliana (Mouse-ear cress).